The following is a 265-amino-acid chain: MHYELHGRMEPDAPTLVLSSGLGGAAAFWLPQLPALTQDYRVLVYDQLGTNKSPANLPAGYSIESMAVELLELLDTLGIRRCHFIGHALGGLVGLQIALLRPQLLQSLVPINAWSSPNPHSARCFAVRLKLLHDSGPAAYVQAQSLFLYPADWIAANSERLARDDAHALAHFPPTMNLVRRIEALLAFDIEAELPRITTPTLLIANRDDMLVPWQRSQHLADNMPNAQLALLNYGGHASSVSDSEPFNQILLDHLAEQCGQVAAA.

The region spanning 14 to 123 (PTLVLSSGLG…WSSPNPHSAR (110 aa)) is the AB hydrolase-1 domain.

This sequence belongs to the AB hydrolase superfamily. Hydrolase RutD family.

The enzyme catalyses carbamate + 2 H(+) = NH4(+) + CO2. In terms of biological role, involved in pyrimidine catabolism. May facilitate the hydrolysis of carbamate, a reaction that can also occur spontaneously. The protein is Putative carbamate hydrolase RutD of Stutzerimonas stutzeri (strain A1501) (Pseudomonas stutzeri).